The sequence spans 121 residues: Large ribosomal subunit protein uL18 (121 aa).

Belongs to the universal ribosomal protein uL18 family. Part of the 50S ribosomal subunit; part of the 5S rRNA/L5/L18/L25 subcomplex. Contacts the 5S and 23S rRNAs.

Its function is as follows. This is one of the proteins that bind and probably mediate the attachment of the 5S RNA into the large ribosomal subunit, where it forms part of the central protuberance. In Delftia acidovorans (strain DSM 14801 / SPH-1), this protein is Large ribosomal subunit protein uL18.